The chain runs to 300 residues: MIQEGKLEQQFFDYLHSERNYSVNTSTAYENDLLDFRRFLNEQAITTYQQVTFLDVRIYLTELKQKSFSRTTVARKISSLRSFYTFLLRENVINENPFTYVSHAKNQLRLPKFFYSEEMEALFQVVYEDNETLTLRDRVLLEVLYGTGIRVSECAGILLPDLDTSYQAILIRGKGNKERYVPFGVYAEDAITDYLPERANLMSRYKKSHDALLVNHYGDPLTTRGIRYCLSKIISKASLTRKIHPHMLRHTFATDLLNNGADMRTVQELLGHASLSSTQIYTHVTKEHLKSTYMKHHPRA.

In terms of domain architecture, Core-binding (CB) spans Ile-2 to Leu-88. The 186-residue stretch at Arg-109–Met-294 folds into the Tyr recombinase domain. Active-site residues include Arg-150, Lys-174, His-246, Arg-249, and His-272. Tyr-281 serves as the catalytic O-(3'-phospho-DNA)-tyrosine intermediate.

This sequence belongs to the 'phage' integrase family. XerC subfamily. In terms of assembly, forms a cyclic heterotetrameric complex composed of two molecules of XerC and two molecules of XerD.

It localises to the cytoplasm. Site-specific tyrosine recombinase, which acts by catalyzing the cutting and rejoining of the recombining DNA molecules. The XerC-XerD complex is essential to convert dimers of the bacterial chromosome into monomers to permit their segregation at cell division. It also contributes to the segregational stability of plasmids. The polypeptide is Tyrosine recombinase XerC (Listeria monocytogenes serotype 4b (strain F2365)).